Here is a 308-residue protein sequence, read N- to C-terminus: U-box domain-containing protein 54 (308 aa).

The interval 172-235 (FSEFSTSAEK…NESDEDPRLE (64 aa)) is disordered. Over residues 210–227 (ESPKKGRKETIEKSKSNE) the composition is skewed to basic and acidic residues. A U-box domain is found at 232 to 306 (PRLEDFKCPI…KDWLEKNPNY (75 aa)).

It carries out the reaction S-ubiquitinyl-[E2 ubiquitin-conjugating enzyme]-L-cysteine + [acceptor protein]-L-lysine = [E2 ubiquitin-conjugating enzyme]-L-cysteine + N(6)-ubiquitinyl-[acceptor protein]-L-lysine.. The protein operates within protein modification; protein ubiquitination. In terms of biological role, functions as an E3 ubiquitin ligase. The sequence is that of U-box domain-containing protein 54 (PUB54) from Arabidopsis thaliana (Mouse-ear cress).